The sequence spans 55 residues: Small integral membrane protein 27 (55 aa).

The chain crosses the membrane as a helical span at residues 11-31; that stretch reads WIYSVLLLAIVLISWGCIIYA.

The protein resides in the membrane. This chain is Small integral membrane protein 27, found in Homo sapiens (Human).